The primary structure comprises 729 residues: Probable pre-mRNA-splicing factor ATP-dependent RNA helicase DEAH3 (729 aa).

A Helicase ATP-binding domain is found at 75–244 (LNTLNSNQTL…FSGAPLMKVP (170 aa)). ATP is bound at residue 88 to 95 (GETGSGKT). The DEAH box motif lies at 191–194 (DEAH). The Helicase C-terminal domain maps to 269–449 (TVVQIHMCEP…NTVLTLKKLG (181 aa)).

It belongs to the DEAD box helicase family. DEAH subfamily. PRP43 sub-subfamily.

It catalyses the reaction ATP + H2O = ADP + phosphate + H(+). In terms of biological role, may be involved in pre-mRNA splicing. This is Probable pre-mRNA-splicing factor ATP-dependent RNA helicase DEAH3 from Arabidopsis thaliana (Mouse-ear cress).